Consider the following 205-residue polypeptide: Protein Nef (205 aa).

The N-myristoyl glycine; by host moiety is linked to residue G2. S6 carries the phosphoserine; by host modification. The tract at residues 62-65 (EEEE) is acidic; interacts with host PACS1 and PACS2; stabilizes the interaction of NEF/MHC-I with host AP1M1; necessary for MHC-I internalization. An SH3-binding; interaction with Src family tyrosine kinases region spans residues 69–78 (PVTPQVPLRP). The short motif at 72–75 (PQVP) is the PxxP; stabilizes the interaction of NEF/MHC-I with host AP1M1; necessary for MHC-I internalization element. The segment at 108-124 (DILDLWIHHTQGYFPDW) is mediates dimerization, Nef-PTE1 interaction. A binding to ATP6V1H region spans residues 148–179 (VEPEKEEANKGENTSLLHPVSLHGMDDPEREV). The Dileucine internalization motif; necessary for CD4 internalization signature appears at 163 to 164 (LL). A Diacidic; necessary for CD4 internalization motif is present at residues 173 to 174 (DD).

It belongs to the lentivirus primate group Nef protein family. Monomer; cytosolic form. Homodimer; membrane bound form. Interacts with Nef associated p21-activated kinase (PAK2); this interaction activates PAK2. Associates with the Nef-MHC-I-AP1 complex; this complex is required for MHC-I internalization. Interacts (via C-terminus) with host PI3-kinase. Interacts with host PACS1; this interaction seems to be weak. Interacts with host PACS2. Interacts with host LCK and MAPK3; these interactions inhibit the kinase activity of the latter. Interacts with host ATP6V1H; this interaction may play a role in CD4 endocytosis. Associates with the CD4-Nef-AP2 complex; this complex is required for CD4 internalization. Interacts with host AP2 subunit alpha and AP2 subunit sigma2. Interacts with TCR-zeta chain; this interaction up-regulates the Fas ligand (FasL) surface expression. Interacts with host HCK, LYN, and SRC; these interactions activate the Src family kinases. Interacts with MAP3K5; this interaction inhibits the Fas and TNFR-mediated death signals. Interacts with beta-COP and PTE1. Interacts with human RACK1; this increases Nef phosphorylation by PKC. Interacts with TP53; this interaction decreases the half-life of TP53, protecting the infected cell against p53-mediated apoptosis. In terms of processing, the virion-associated Nef proteins are cleaved by the viral protease to release the soluble C-terminal core protein. Nef is probably cleaved concomitantly with viral structural proteins on maturation of virus particles. Myristoylated. Post-translationally, phosphorylated on serine residues, probably by host PKCdelta and theta.

It localises to the host cell membrane. The protein resides in the virion. It is found in the secreted. The protein localises to the host Golgi apparatus membrane. Factor of infectivity and pathogenicity, required for optimal virus replication. Alters numerous pathways of T-lymphocyte function and down-regulates immunity surface molecules in order to evade host defense and increase viral infectivity. Alters the functionality of other immunity cells, like dendritic cells, monocytes/macrophages and NK cells. In terms of biological role, in infected CD4(+) T-lymphocytes, down-regulates the surface MHC-I, mature MHC-II, CD4, CD28, CCR5 and CXCR4 molecules. Mediates internalization and degradation of host CD4 through the interaction of with the cytoplasmic tail of CD4, the recruitment of AP-2 (clathrin adapter protein complex 2), internalization through clathrin coated pits, and subsequent transport to endosomes and lysosomes for degradation. Diverts host MHC-I molecules to the trans-Golgi network-associated endosomal compartments by an endocytic pathway to finally target them for degradation. MHC-I down-regulation may involve AP-1 (clathrin adapter protein complex 1) or possibly Src family kinase-ZAP70/Syk-PI3K cascade recruited by PACS2. In consequence infected cells are masked for immune recognition by cytotoxic T-lymphocytes. Decreasing the number of immune receptors also prevents reinfection by more HIV particles (superinfection). Down-regulates host SERINC3 and SERINC5 thereby excluding these proteins from the viral particles. Virion infectivity is drastically higher when SERINC3 or SERINC5 are excluded from the viral envelope, because these host antiviral proteins impair the membrane fusion event necessary for subsequent virion penetration. Its function is as follows. Bypasses host T-cell signaling by inducing a transcriptional program nearly identical to that of anti-CD3 cell activation. Interaction with TCR-zeta chain up-regulates the Fas ligand (FasL). Increasing surface FasL molecules and decreasing surface MHC-I molecules on infected CD4(+) cells send attacking cytotoxic CD8+ T-lymphocytes into apoptosis. Functionally, plays a role in optimizing the host cell environment for viral replication without causing cell death by apoptosis. Protects the infected cells from apoptosis in order to keep them alive until the next virus generation is ready to strike. Inhibits the Fas and TNFR-mediated death signals by blocking MAP3K5/ASK1. Decreases the half-life of TP53, protecting the infected cell against p53-mediated apoptosis. Inhibits the apoptotic signals regulated by the Bcl-2 family proteins through the formation of a Nef/PI3-kinase/PAK2 complex that leads to activation of PAK2 and induces phosphorylation of host BAD. Extracellular Nef protein targets CD4(+) T-lymphocytes for apoptosis by interacting with CXCR4 surface receptors. The chain is Protein Nef from Homo sapiens (Human).